The primary structure comprises 339 residues: DNA-directed RNA polymerase subunit alpha (339 aa).

The alpha N-terminal domain (alpha-NTD) stretch occupies residues 1 to 233 (MVREEVAGST…DLFLPFLHAE (233 aa)). The interval 266 to 339 (GIPLNCIFID…IDLLKNKLSF (74 aa)) is alpha C-terminal domain (alpha-CTD).

The protein belongs to the RNA polymerase alpha chain family. In terms of assembly, in plastids the minimal PEP RNA polymerase catalytic core is composed of four subunits: alpha, beta, beta', and beta''. When a (nuclear-encoded) sigma factor is associated with the core the holoenzyme is formed, which can initiate transcription.

The protein resides in the plastid. The protein localises to the chloroplast. It carries out the reaction RNA(n) + a ribonucleoside 5'-triphosphate = RNA(n+1) + diphosphate. In terms of biological role, DNA-dependent RNA polymerase catalyzes the transcription of DNA into RNA using the four ribonucleoside triphosphates as substrates. The chain is DNA-directed RNA polymerase subunit alpha from Aegilops speltoides (Goatgrass).